The sequence spans 352 residues: Lipoyl synthase (352 aa).

The interval 1–21 (MTSVDTPTPHGGTPAPAPATA) is disordered. The [4Fe-4S] cluster site is built by cysteine 71, cysteine 76, cysteine 82, cysteine 97, cysteine 101, cysteine 104, and serine 308. The Radical SAM core domain occupies 83 to 297 (WEDREATFLI…SRVAEEIGFA (215 aa)).

The protein belongs to the radical SAM superfamily. Lipoyl synthase family. The cofactor is [4Fe-4S] cluster.

It is found in the cytoplasm. The catalysed reaction is [[Fe-S] cluster scaffold protein carrying a second [4Fe-4S](2+) cluster] + N(6)-octanoyl-L-lysyl-[protein] + 2 oxidized [2Fe-2S]-[ferredoxin] + 2 S-adenosyl-L-methionine + 4 H(+) = [[Fe-S] cluster scaffold protein] + N(6)-[(R)-dihydrolipoyl]-L-lysyl-[protein] + 4 Fe(3+) + 2 hydrogen sulfide + 2 5'-deoxyadenosine + 2 L-methionine + 2 reduced [2Fe-2S]-[ferredoxin]. Its pathway is protein modification; protein lipoylation via endogenous pathway; protein N(6)-(lipoyl)lysine from octanoyl-[acyl-carrier-protein]: step 2/2. Functionally, catalyzes the radical-mediated insertion of two sulfur atoms into the C-6 and C-8 positions of the octanoyl moiety bound to the lipoyl domains of lipoate-dependent enzymes, thereby converting the octanoylated domains into lipoylated derivatives. This chain is Lipoyl synthase, found in Nocardia farcinica (strain IFM 10152).